The sequence spans 253 residues: Leucyl/phenylalanyl-tRNA--protein transferase (253 aa).

The protein belongs to the L/F-transferase family.

It localises to the cytoplasm. The catalysed reaction is N-terminal L-lysyl-[protein] + L-leucyl-tRNA(Leu) = N-terminal L-leucyl-L-lysyl-[protein] + tRNA(Leu) + H(+). It carries out the reaction N-terminal L-arginyl-[protein] + L-leucyl-tRNA(Leu) = N-terminal L-leucyl-L-arginyl-[protein] + tRNA(Leu) + H(+). It catalyses the reaction L-phenylalanyl-tRNA(Phe) + an N-terminal L-alpha-aminoacyl-[protein] = an N-terminal L-phenylalanyl-L-alpha-aminoacyl-[protein] + tRNA(Phe). Functions in the N-end rule pathway of protein degradation where it conjugates Leu, Phe and, less efficiently, Met from aminoacyl-tRNAs to the N-termini of proteins containing an N-terminal arginine or lysine. The sequence is that of Leucyl/phenylalanyl-tRNA--protein transferase from Bordetella petrii (strain ATCC BAA-461 / DSM 12804 / CCUG 43448).